Consider the following 439-residue polypeptide: RNA polymerase II-associated protein RBA50 (439 aa).

Disordered stretches follow at residues 1–35 (MDLL…GFPE) and 49–79 (LREK…SEAK). Residues 15 to 30 (SVESNDNGTLSTNNCG) show a composition bias toward polar residues.

It belongs to the RPAP1 family.

The protein localises to the cytoplasm. Forms an interface between the RNA polymerase II enzyme and chaperone/scaffolding proteins, suggesting that it is required to connect RNA polymerase II to regulators of protein complex formation. The chain is RNA polymerase II-associated protein RBA50 (RBA50) from Saccharomyces cerevisiae (strain ATCC 204508 / S288c) (Baker's yeast).